The chain runs to 263 residues: Proteasome subunit alpha type-1 (263 aa).

Met-1 is modified (N-acetylmethionine). Ser-110 bears the Phosphoserine; alternate mark. A glycan (O-linked (GlcNAc) serine; alternate) is linked at Ser-110. Residue Lys-115 forms a Glycyl lysine isopeptide (Lys-Gly) (interchain with G-Cter in ubiquitin) linkage. Position 177 is a phosphoserine (Ser-177). Lys-208 is covalently cross-linked (Glycyl lysine isopeptide (Lys-Gly) (interchain with G-Cter in ubiquitin)). A disordered region spans residues 232–263; the sequence is FLDGLEERPQRKAQPSQAADEPAEKADEPMEH. The segment covering 253–263 has biased composition (basic and acidic residues); the sequence is PAEKADEPMEH.

This sequence belongs to the peptidase T1A family. In terms of assembly, the 26S proteasome consists of a 20S proteasome core and two 19S regulatory subunits. The 20S proteasome core is a barrel-shaped complex made of 28 subunits that are arranged in four stacked rings. The two outer rings are each formed by seven alpha subunits, and the two inner rings are formed by seven beta subunits. The proteolytic activity is exerted by three beta-subunits PSMB5, PSMB6 and PSMB7. Interacts with NOTCH3. Interacts with ZFAND1. Post-translationally, proteolytically cleaved from a C-terminal extension in the course of the conversion of the proteasome from its latent form into its active form. In terms of tissue distribution, ubiquitous.

It localises to the cytoplasm. It is found in the nucleus. Its function is as follows. Component of the 20S core proteasome complex involved in the proteolytic degradation of most intracellular proteins. This complex plays numerous essential roles within the cell by associating with different regulatory particles. Associated with two 19S regulatory particles, forms the 26S proteasome and thus participates in the ATP-dependent degradation of ubiquitinated proteins. The 26S proteasome plays a key role in the maintenance of protein homeostasis by removing misfolded or damaged proteins that could impair cellular functions, and by removing proteins whose functions are no longer required. Associated with the PA200 or PA28, the 20S proteasome mediates ubiquitin-independent protein degradation. This type of proteolysis is required in several pathways including spermatogenesis (20S-PA200 complex) or generation of a subset of MHC class I-presented antigenic peptides (20S-PA28 complex). The protein is Proteasome subunit alpha type-1 (Psma1) of Rattus norvegicus (Rat).